The sequence spans 1040 residues: Kinesin-like protein KIN-14H (1040 aa).

The Calponin-homology (CH) domain occupies 54–176 (DLRRYEAARW…CVLALKSYRE (123 aa)). Positions 208 to 242 (SEVPVDAVTNSPSSTPSSEQPLLDQSDSNTKNDGT) are disordered. Over residues 215 to 242 (VTNSPSSTPSSEQPLLDQSDSNTKNDGT) the composition is skewed to polar residues. A Kinesin motor domain is found at 434–754 (SIRVYCRVRP…LKFAERVATV (321 aa)). Position 517–524 (517–524 (GQTGSGKT)) interacts with ATP. Positions 761–796 (VNKDTSEVKELKEQIASLKLALARKESGADQTQLQR) form a coiled coil. Residues 809–818 (LGVSSSFSKS) show a composition bias toward low complexity. Disordered regions lie at residues 809-871 (LGVS…GKEE), 887-926 (EDEI…KCNS), and 969-1040 (MPRP…QNPK). A compositionally biased stretch (polar residues) spans 840-851 (IEGQSDSASSLD). Positions 887–923 (EDEITRSSKPENRAHTQLEKRTSSLKREATRGVDKNK) are enriched in basic and acidic residues. Residues 1018 to 1031 (SPGQTSSRHNNSTV) show a composition bias toward polar residues.

It belongs to the TRAFAC class myosin-kinesin ATPase superfamily. Kinesin family. KIN-14 subfamily.

The sequence is that of Kinesin-like protein KIN-14H from Arabidopsis thaliana (Mouse-ear cress).